The sequence spans 81 residues: MEKLTILLLVAAVLMSIQAVNQEKHQRAKMNLLSKRKPPAERWWRWGGCMAWFGLCSKDSECCSNSCDVTRCELMPFPPDW.

Residues 1–19 form the signal peptide; sequence MEKLTILLLVAAVLMSIQA. A propeptide spanning residues 20-44 is cleaved from the precursor; that stretch reads VNQEKHQRAKMNLLSKRKPPAERWW. 3 cysteine pairs are disulfide-bonded: C49–C63, C56–C67, and C62–C72.

It belongs to the conotoxin O2 superfamily. In terms of tissue distribution, expressed by the venom duct.

It is found in the secreted. Inhibits voltage-gated ion channels. This is Conotoxin Vc6.7 from Conus victoriae (Queen Victoria cone).